The sequence spans 339 residues: Olfactory receptor 7E24 (339 aa).

Over 1 to 43 (MSYFPILFFFFLKRCPSYTEPQNLTGVSEFLLLGLSEDPELQP) the chain is Extracellular. The N-linked (GlcNAc...) asparagine glycan is linked to Asn-23. The helical transmembrane segment at 44–64 (VLAGLFLSMYLVTVLGNLLII) threads the bilayer. Residues 65–72 (LAVSSDSH) are Cytoplasmic-facing. Residues 73–93 (LHTPMYFFLSNLSLADIGFTS) traverse the membrane as a helical segment. The Extracellular portion of the chain corresponds to 94-117 (TTVPKMIVDMQTHSRVISYEGCLT). Cys-115 and Cys-207 are disulfide-bonded. A helical transmembrane segment spans residues 118–138 (QMSFFVLFACMDDMLLSVMAY). The Cytoplasmic portion of the chain corresponds to 139–157 (DRFVAICHPLHYRIIMNPR). The helical transmembrane segment at 158–178 (LCGFLILLSFFISLLDSQLHN) threads the bilayer. The Extracellular segment spans residues 179 to 215 (LIMLQLTCFKDVDISNFFCDPSQLLHLRCSDTFINEM). A helical transmembrane segment spans residues 216–235 (VIYFMGAIFGCLPISGILFS). Residues 236-255 (YYKIVSPILRVPTSDGKYKA) are Cytoplasmic-facing. A helical transmembrane segment spans residues 256–276 (FSTCGSHLAVVCLFYGTGLVG). Topologically, residues 277–289 (YLSSAVLPSPRKS) are extracellular. The chain crosses the membrane as a helical span at residues 290-310 (MVASVMYTVVTPMLNPFIYSL). At 311–339 (RNKDIQSALCRLHGRIIKSHHLHPFCYMG) the chain is on the cytoplasmic side.

This sequence belongs to the G-protein coupled receptor 1 family.

It is found in the cell membrane. Its function is as follows. Odorant receptor. The sequence is that of Olfactory receptor 7E24 (OR7E24) from Homo sapiens (Human).